Consider the following 517-residue polypeptide: Zinc finger protein AEBP2 (517 aa).

Residues 1 to 229 (MAAAITDMAD…DSEDSISSTI (229 aa)) form a disordered region. N-acetylalanine is present on Ala-2. Phosphoserine occurs at positions 18 and 24. Acidic residues predominate over residues 36–51 (PEEEEEEEEEEEEAEA). A compositionally biased stretch (gly residues) spans 61-78 (GGSGGGGGGGGGGVGGGE). Over residues 94–121 (GEDEDEEEDDEEEEDESSSSGGGEEESS) the composition is skewed to acidic residues. Residues 122-150 (AESLVGSSGGSSSDETRSLSPGAASSSSG) show a composition bias toward low complexity. Ser-141 is modified (phosphoserine). The segment covering 152–163 (GDGKEGLEEPKG) has biased composition (basic and acidic residues). Gly residues-rich tracts occupy residues 166-175 (GSQGGGGGGS) and 185-196 (GDEGYGTGGGGS). Residues Ser-206, Ser-210, and Ser-211 each carry the phosphoserine modification. The interaction with RBBP4 stretch occupies residues 209-294 (MSSDGEPLSR…IHVDGQRGGV (86 aa)). The C2H2-type 1 zinc-finger motif lies at 261 to 286 (YNCCWDQCQACFNSSPDLADHIRSIH). The C2H2-type 2; degenerate zinc finger occupies 300–322 (KGCKVYNTPSTSQSWLQRHMLTH). The C2H2-type 3 zinc-finger motif lies at 328-352 (FKCVVGGCNASFASQGGLARHVPTH). Polar residues predominate over residues 352–365 (HFSQQNSSKVSSQP). The segment at 352-394 (HFSQQNSSKVSSQPKAKEESPSKAGMNKRRKLKNKRRRSLPRP) is disordered. Positions 377 to 392 (MNKRRKLKNKRRRSLP) are enriched in basic residues. A Phosphoserine modification is found at Ser-390. Residues 407–478 (RHRAICFNLS…QLKTKVVHLS (72 aa)) form an interaction with SUZ12 region. The interval 495-517 (TMPQKRLKRTLIRKVFNLYLSKQ) is important for nucleosome binding activity of the PRC2 complex.

This sequence belongs to the AEBP2/jing C2H2-type zinc-finger family. As to quaternary structure, self-associates. Associates with the PRC2 complex, which consists of the core components EED, EZH1 or EZH2, SUZ12, and RBBP4, and various combinations of accessory subunits including AEBP2, JARID2, PHF19, MTF2 and EPOP. Found in a monomeric PRC2.2 (class 2) complex consisting of at least SUZ12, RBBP4, AEBP2 and JARID2. Within the PRC2 complex, interacts directly with SUZ12; competes with PHF19 for SUZ12 binding. Interacts with EED, EZH2, and RBBP4. May also interact with RBBP7.

Its subcellular location is the nucleus. In terms of biological role, acts as an accessory subunit for the core Polycomb repressive complex 2 (PRC2), which mediates histone H3K27 (H3K27me3) trimethylation on chromatin leading to transcriptional repression of the affected target gene. Plays a role in nucleosome localization of the PRC2 complex. The sequence is that of Zinc finger protein AEBP2 (AEBP2) from Homo sapiens (Human).